The sequence spans 128 residues: Ribonuclease P protein component (128 aa).

Belongs to the RnpA family. In terms of assembly, consists of a catalytic RNA component (M1 or rnpB) and a protein subunit.

It catalyses the reaction Endonucleolytic cleavage of RNA, removing 5'-extranucleotides from tRNA precursor.. RNaseP catalyzes the removal of the 5'-leader sequence from pre-tRNA to produce the mature 5'-terminus. It can also cleave other RNA substrates such as 4.5S RNA. The protein component plays an auxiliary but essential role in vivo by binding to the 5'-leader sequence and broadening the substrate specificity of the ribozyme. This chain is Ribonuclease P protein component, found in Prochlorococcus marinus (strain MIT 9303).